The primary structure comprises 228 residues: 7-cyano-7-deazaguanine synthase (228 aa).

F10–A20 is an ATP binding site. Zn(2+) contacts are provided by C190, C205, C208, and C211.

The protein belongs to the QueC family. Requires Zn(2+) as cofactor.

The catalysed reaction is 7-carboxy-7-deazaguanine + NH4(+) + ATP = 7-cyano-7-deazaguanine + ADP + phosphate + H2O + H(+). The protein operates within purine metabolism; 7-cyano-7-deazaguanine biosynthesis. In terms of biological role, catalyzes the ATP-dependent conversion of 7-carboxy-7-deazaguanine (CDG) to 7-cyano-7-deazaguanine (preQ(0)). This chain is 7-cyano-7-deazaguanine synthase, found in Helicobacter pylori (strain HPAG1).